We begin with the raw amino-acid sequence, 220 residues long: Ribosomal RNA small subunit methyltransferase J (220 aa).

S-adenosyl-L-methionine-binding positions include 55–56, 71–72, and D123; these read RD and ER.

The protein belongs to the methyltransferase superfamily. RsmJ family.

The protein resides in the cytoplasm. It catalyses the reaction guanosine(1516) in 16S rRNA + S-adenosyl-L-methionine = N(2)-methylguanosine(1516) in 16S rRNA + S-adenosyl-L-homocysteine + H(+). Its function is as follows. Specifically methylates the guanosine in position 1516 of 16S rRNA. The sequence is that of Ribosomal RNA small subunit methyltransferase J from Rhodopseudomonas palustris (strain BisB5).